The following is a 331-amino-acid chain: Tetraacyldisaccharide 4'-kinase (331 aa).

60-67 (TIGGTGKT) is a binding site for ATP.

This sequence belongs to the LpxK family.

It catalyses the reaction a lipid A disaccharide + ATP = a lipid IVA + ADP + H(+). It functions in the pathway glycolipid biosynthesis; lipid IV(A) biosynthesis; lipid IV(A) from (3R)-3-hydroxytetradecanoyl-[acyl-carrier-protein] and UDP-N-acetyl-alpha-D-glucosamine: step 6/6. Its function is as follows. Transfers the gamma-phosphate of ATP to the 4'-position of a tetraacyldisaccharide 1-phosphate intermediate (termed DS-1-P) to form tetraacyldisaccharide 1,4'-bis-phosphate (lipid IVA). In Pseudomonas syringae pv. tomato (strain ATCC BAA-871 / DC3000), this protein is Tetraacyldisaccharide 4'-kinase.